The following is a 176-amino-acid chain: Disulfide bond formation protein B (176 aa).

Residues 1-14 (MLRFLNQCSHGRGA) lie on the Cytoplasmic side of the membrane. The helical transmembrane segment at 15–31 (WLLMAFTALALELTALW) threads the bilayer. At 32–49 (FQHVMLLKPCVLCIYERC) the chain is on the periplasmic side. Cys41 and Cys44 are oxidised to a cystine. Residues 50-65 (ALFGVLGAALIGAIAP) form a helical membrane-spanning segment. Over 66–71 (KTPLRY) the chain is Cytoplasmic. A helical membrane pass occupies residues 72 to 89 (VAMVIWLYSAFRGVQLTY). Residues 90-144 (EHTMLQLYPSPFATCDFMARFPEWLPLDKWVPQVFVASGDCAERQWEFLGLEMPQ) lie on the Periplasmic side of the membrane. Residues Cys104 and Cys130 are joined by a disulfide bond. The helical transmembrane segment at 145–163 (WLLGIFIAYLIVAVLVVIS) threads the bilayer. Residues 164–176 (QPFKAKKRDLFGR) are Cytoplasmic-facing.

Belongs to the DsbB family.

It is found in the cell inner membrane. In terms of biological role, required for disulfide bond formation in some periplasmic proteins. Acts by oxidizing the DsbA protein. This chain is Disulfide bond formation protein B, found in Escherichia coli O6:K15:H31 (strain 536 / UPEC).